A 521-amino-acid chain; its full sequence is CD166 antigen (521 aa).

Residues glycine 1–threonine 465 lie on the Extracellular side of the membrane. N-linked (GlcNAc...) asparagine glycosylation is found at asparagine 33, asparagine 105, asparagine 244, asparagine 299, asparagine 395, asparagine 418, and asparagine 437. One can recognise an Ig-like V-type 2 domain in the interval proline 63–glutamine 172. Intrachain disulfides connect cysteine 95–cysteine 158, cysteine 208–cysteine 251, cysteine 292–cysteine 330, and cysteine 373–cysteine 423. 3 Ig-like C2-type domains span residues proline 183–threonine 266, aspartate 271–threonine 347, and proline 354–serine 439. Residues leucine 466–leucine 487 traverse the membrane as a helical segment. Topologically, residues tyrosine 488–alanine 521 are cytoplasmic. Residues asparagine 500–alanine 521 form a disordered region. A compositionally biased stretch (basic and acidic residues) spans glutamate 507–alanine 521.

Homodimer. Interacts (via extracellular domain) with CD6 (via extracellular domain). Homodimerization and interaction with CD6 involve the same region and cannot occur simultaneously. The affinity for CD6 is much higher than the affinity for self-association. Interacts (via glycosylated extracellular domain) with LGALS1 and LGALS3. Interaction with LGALS1 or LGALS3 inhibits interaction with CD6. Post-translationally, glycosylated.

Its subcellular location is the cell membrane. It is found in the cell projection. The protein resides in the axon. The protein localises to the dendrite. Functionally, cell adhesion molecule that mediates both heterotypic cell-cell contacts via its interaction with CD6, as well as homotypic cell-cell contacts. Promotes T-cell activation and proliferation via its interactions with CD6. Contributes to the formation and maturation of the immunological synapse via its interactions with CD6. Mediates homotypic interactions with cells that express ALCAM. Mediates attachment of dendritic cells onto endothelial cells via homotypic interaction. Inhibits endothelial cell migration and promotes endothelial tube formation via homotypic interactions. Required for normal organization of the lymph vessel network. Required for normal hematopoietic stem cell engraftment in the bone marrow. Plays a role in hematopoiesis; required for normal numbers of hematopoietic stem cells in bone marrow. Promotes in vitro osteoblast proliferation and differentiation. Promotes neurite extension, axon growth and axon guidance; axons grow preferentially on surfaces that contain ALCAM. Mediates outgrowth and pathfinding for retinal ganglion cell axons. In Canis lupus familiaris (Dog), this protein is CD166 antigen (ALCAM).